Consider the following 342-residue polypeptide: L-threonine 3-dehydrogenase (342 aa).

C38 contributes to the Zn(2+) binding site. Catalysis depends on charge relay system residues T40 and H43. H63, E64, C93, C96, C99, and C107 together coordinate Zn(2+). Residues I175, D195, R200, 262 to 264 (LGI), and 286 to 287 (IY) each bind NAD(+).

It belongs to the zinc-containing alcohol dehydrogenase family. Homotetramer. It depends on Zn(2+) as a cofactor.

Its subcellular location is the cytoplasm. The catalysed reaction is L-threonine + NAD(+) = (2S)-2-amino-3-oxobutanoate + NADH + H(+). The protein operates within amino-acid degradation; L-threonine degradation via oxydo-reductase pathway; glycine from L-threonine: step 1/2. Catalyzes the NAD(+)-dependent oxidation of L-threonine to 2-amino-3-ketobutyrate. This Paraburkholderia phymatum (strain DSM 17167 / CIP 108236 / LMG 21445 / STM815) (Burkholderia phymatum) protein is L-threonine 3-dehydrogenase.